Here is a 316-residue protein sequence, read N- to C-terminus: Transaldolase 2 (316 aa).

Catalysis depends on lysine 131, which acts as the Schiff-base intermediate with substrate.

Belongs to the transaldolase family. Type 1 subfamily. In terms of assembly, homodimer.

Its subcellular location is the cytoplasm. It catalyses the reaction D-sedoheptulose 7-phosphate + D-glyceraldehyde 3-phosphate = D-erythrose 4-phosphate + beta-D-fructose 6-phosphate. The protein operates within carbohydrate degradation; pentose phosphate pathway; D-glyceraldehyde 3-phosphate and beta-D-fructose 6-phosphate from D-ribose 5-phosphate and D-xylulose 5-phosphate (non-oxidative stage): step 2/3. Transaldolase is important for the balance of metabolites in the pentose-phosphate pathway. The protein is Transaldolase 2 of Shigella sonnei (strain Ss046).